A 311-amino-acid chain; its full sequence is Tyrosine recombinase XerC (311 aa).

The Core-binding (CB) domain maps to 14–100 (ESLNETAKKF…SLRTFYKVLL (87 aa)). The 183-residue stretch at 121–303 (EVPKNFRINE…SKEKIKEVYR (183 aa)) folds into the Tyr recombinase domain. Active-site residues include arginine 163, lysine 187, histidine 255, arginine 258, and histidine 281. The active-site O-(3'-phospho-DNA)-tyrosine intermediate is tyrosine 290.

This sequence belongs to the 'phage' integrase family. XerC subfamily. As to quaternary structure, forms a cyclic heterotetrameric complex composed of two molecules of XerC and two molecules of XerD.

It localises to the cytoplasm. Functionally, site-specific tyrosine recombinase, which acts by catalyzing the cutting and rejoining of the recombining DNA molecules. The XerC-XerD complex is essential to convert dimers of the bacterial chromosome into monomers to permit their segregation at cell division. It also contributes to the segregational stability of plasmids. The protein is Tyrosine recombinase XerC of Leptospira interrogans serogroup Icterohaemorrhagiae serovar copenhageni (strain Fiocruz L1-130).